A 439-amino-acid chain; its full sequence is Mitochondrial distribution and morphology protein 12 (439 aa).

Residues 1–439 (MSIDINWDTI…VYPSFWTFLV (439 aa)) form the SMP-LTD domain. Disordered regions lie at residues 65–165 (PLPD…PGAL) and 229–284 (LTLT…HEKS). The segment covering 69–90 (FYEDDEDYPDEEGDEAENEAED) has biased composition (acidic residues). Residues 109–121 (PSRDSQSRERGRG) show a composition bias toward basic and acidic residues. Polar residues predominate over residues 229-243 (LTLTPQSHPDPTSRP).

This sequence belongs to the MDM12 family. Component of the ER-mitochondria encounter structure (ERMES) or MDM complex, composed of MMM1, MDM10, mdm12 and MDM34. An MMM1 homodimer associates with one molecule of mdm12 on each side in a pairwise head-to-tail manner, and the SMP-LTD domains of MMM1 and mdm12 generate a continuous hydrophobic tunnel for phospholipid trafficking.

The protein resides in the mitochondrion outer membrane. The protein localises to the endoplasmic reticulum membrane. In terms of biological role, component of the ERMES/MDM complex, which serves as a molecular tether to connect the endoplasmic reticulum (ER) and mitochondria. Components of this complex are involved in the control of mitochondrial shape and protein biogenesis, and function in nonvesicular lipid trafficking between the ER and mitochondria. mdm12 is required for the interaction of the ER-resident membrane protein MMM1 and the outer mitochondrial membrane-resident beta-barrel protein MDM10. The mdm12-MMM1 subcomplex functions in the major beta-barrel assembly pathway that is responsible for biogenesis of all mitochondrial outer membrane beta-barrel proteins, and acts in a late step after the SAM complex. The MDM10-mdm12-MMM1 subcomplex further acts in the TOM40-specific pathway after the action of the mdm12-MMM1 complex. Essential for establishing and maintaining the structure of mitochondria and maintenance of mtDNA nucleoids. This chain is Mitochondrial distribution and morphology protein 12, found in Pyrenophora tritici-repentis (strain Pt-1C-BFP) (Wheat tan spot fungus).